Here is a 142-residue protein sequence, read N- to C-terminus: Deoxyuridine 5'-triphosphate nucleotidohydrolase (142 aa).

Substrate contacts are provided by residues 62–64, Asn75, and 79–81; these read RSG and TID.

Belongs to the dUTPase family. It depends on Mg(2+) as a cofactor.

It catalyses the reaction dUTP + H2O = dUMP + diphosphate + H(+). It functions in the pathway pyrimidine metabolism; dUMP biosynthesis; dUMP from dCTP (dUTP route): step 2/2. Functionally, this enzyme is involved in nucleotide metabolism: it produces dUMP, the immediate precursor of thymidine nucleotides and it decreases the intracellular concentration of dUTP so that uracil cannot be incorporated into DNA. The sequence is that of Deoxyuridine 5'-triphosphate nucleotidohydrolase from Crocosphaera subtropica (strain ATCC 51142 / BH68) (Cyanothece sp. (strain ATCC 51142)).